The chain runs to 334 residues: Transcription initiation factor IIB (334 aa).

The segment at 34-65 (TETVCPECGGRQLVHDYERAELVCQSCGLVID) adopts a TFIIB-type zinc-finger fold. Residues cysteine 38, cysteine 41, cysteine 57, and cysteine 60 each contribute to the Zn(2+) site. A run of 2 repeats spans residues 151-234 (SELD…SREL) and 245-326 (DYVP…ELAE).

Belongs to the TFIIB family.

Functionally, stabilizes TBP binding to an archaeal box-A promoter. Also responsible for recruiting RNA polymerase II to the pre-initiation complex (DNA-TBP-TFIIB). This Methanoregula boonei (strain DSM 21154 / JCM 14090 / 6A8) protein is Transcription initiation factor IIB.